We begin with the raw amino-acid sequence, 921 residues long: Sodium/calcium exchanger 2 (921 aa).

The first 20 residues, 1–20 (MAPLALMGVVLLLGVPHCLG), serve as a signal peptide directing secretion. Residues 23–42 (TPTPSLPPPTANDSDASPEG) form a disordered region. The helical transmembrane segment at 69–89 (VARAVVYFVAMVYMFLGVSII) threads the bilayer. Residues asparagine 125 and asparagine 130 are each glycosylated (N-linked (GlcNAc...) asparagine). Helical transmembrane passes span 131 to 151 (LTLMALGSSAPEILLTVIEVC), 165 to 185 (IVGSAAFNMFVVIAVCVYVIP), 197 to 217 (VFFVTASWSIFAYVWLYLILA), and 226 to 246 (VWEALLTLIFFPVCVVFAWMA). The segment at 248 to 267 (KRLLFYKYVYKRYRTDPRSG) is putative calmodulin-binding region. The tract at residues 371-391 (HAADAARRPGATDGAPDDEDD) is disordered. Calx-beta domains are found at residues 389–482 (EDDG…FVRL) and 512–611 (ATVT…FIEL). Positions 407, 443, 468, 469, 471, 473, 476, 518, 519, 520, 536, 598, 599, and 600 each coordinate Ca(2+). The residue at position 622 (serine 622) is a Phosphoserine. Residue glutamate 665 participates in Ca(2+) binding. A run of 6 helical transmembrane segments spans residues 721–741 (CFDYVMHFLTVFWKVLFACVP), 749–769 (WACFGVCILVIGVLTALIGDL), 786–806 (VVFVALGTSIPDTFASKVAAL), 823–843 (AVNVFLGLGVAWSVAAVYWAV), 855–875 (LAFSVTLFTVFAFVCIAVLLY), and 893–913 (LATTALFLGLWFLYILFSSLE).

It belongs to the Ca(2+):cation antiporter (CaCA) (TC 2.A.19) family. SLC8 subfamily. In terms of tissue distribution, detected in kidney cortex, in distal convoluted tubules and connecting segments. Detected in brain and spinal cord (at protein level). Detected in brain, especially in hippocampus CA1, CA2 and CA3 fiels, dentate gyrus, cerebellum and brain cortex.

The protein resides in the cell membrane. It is found in the basolateral cell membrane. It carries out the reaction Ca(2+)(in) + 3 Na(+)(out) = Ca(2+)(out) + 3 Na(+)(in). With respect to regulation, calcium transport is down-regulated by Na(+) and stimulated by Ca(2+). Functionally, mediates the electrogenic exchange of Ca(2+) against Na(+) ions across the cell membrane, and thereby contributes to the regulation of cytoplasmic Ca(2+) levels and Ca(2+)-dependent cellular processes. Contributes to cellular Ca(2+) homeostasis in excitable cells. Contributes to the rapid decrease of cytoplasmic Ca(2+) levels back to baseline after neuronal activation, and thereby contributes to modulate synaptic plasticity, learning and memory. Plays a role in regulating urinary Ca(2+) and Na(+) excretion. The polypeptide is Sodium/calcium exchanger 2 (Mus musculus (Mouse)).